Consider the following 187-residue polypeptide: Auxin-binding protein T85 (187 aa).

The signal sequence occupies residues 1–20; the sequence is MARHVLVVVAVLLFATAEAS. The cysteines at positions 22 and 177 are disulfide-linked. Zn(2+) contacts are provided by His78, His80, and Glu84. Residue Asn117 is glycosylated (N-linked (GlcNAc...) asparagine). His128 provides a ligand contact to Zn(2+). The Prevents secretion from ER signature appears at 184–187; that stretch reads KDEL.

As to quaternary structure, homodimer.

It is found in the endoplasmic reticulum lumen. In terms of biological role, this is probably a receptor for the plant hormone auxin. This is Auxin-binding protein T85 (T85) from Nicotiana tabacum (Common tobacco).